Reading from the N-terminus, the 313-residue chain is Sideroflexin-4 (313 aa).

Transmembrane regions (helical) follow at residues 87–107 (AALL…VKSL), 141–161 (LLLG…PRLL), 175–191 (FIPV…NVIA), 230–247 (VVLF…AYFF), and 269–289 (VLVM…IGRI).

Belongs to the sideroflexin family.

It localises to the mitochondrion inner membrane. Functionally, mitochondrial amino-acid transporter. Does not act as a serine transporter: not able to mediate transport of serine into mitochondria. The chain is Sideroflexin-4 from Bos taurus (Bovine).